The chain runs to 464 residues: MSSGRIIQIIGAVIDVEFERTSVPKIYDALQVDGTETTLEVQQQLGDGVVRTIAMGSTEGLKRGLTVTSTNAPISVPVGTATLGRIMDVLGRPIDEAGPVATEERLPIHRQAPSYAEQAASTDLLETGIKVIDLLCPFAKGGKVGLFGGAGVGKTVNMMELINNIAKAHSGLSVFAGVGERTREGNDFYHEMKDSNVLDKVAMVYGQMNEPPGNRLRVALTGLTMAEYFRDEKDENGKGRDVLLFVDNIYRYTLAGTEVSALLGRMPSAVGYQPTLAEEMGVLQERITSTKSGSITSIQAVYVPADDLTDPSPATTFAHLDATVVLSRDIASSGIYPAIDPLDSTSRQLDPLVVGQEHYEIARAVQNVLQRYKELKDIIAILGMDELAEEDKLVVYRARKIQRFFSQPFHVAEVFTGAPGKLVPLKETIRGFKGLLAGEYDHIPEQAFYMVGGIDEVIAKAEKL.

148 to 155 is a binding site for ATP; the sequence is GGAGVGKT.

This sequence belongs to the ATPase alpha/beta chains family. As to quaternary structure, F-type ATPases have 2 components, CF(1) - the catalytic core - and CF(0) - the membrane proton channel. CF(1) has five subunits: alpha(3), beta(3), gamma(1), delta(1), epsilon(1). CF(0) has three main subunits: a(1), b(2) and c(9-12). The alpha and beta chains form an alternating ring which encloses part of the gamma chain. CF(1) is attached to CF(0) by a central stalk formed by the gamma and epsilon chains, while a peripheral stalk is formed by the delta and b chains.

Its subcellular location is the cell inner membrane. The catalysed reaction is ATP + H2O + 4 H(+)(in) = ADP + phosphate + 5 H(+)(out). In terms of biological role, produces ATP from ADP in the presence of a proton gradient across the membrane. The catalytic sites are hosted primarily by the beta subunits. This is ATP synthase subunit beta from Acinetobacter baumannii (strain AB0057).